The chain runs to 345 residues: Dihydroorotate dehydrogenase (quinone) (345 aa).

FMN is bound by residues 65–69 (AGLDK) and T89. Residue K69 coordinates substrate. Position 114 to 118 (114 to 118 (NRLGF)) interacts with substrate. Positions 146 and 179 each coordinate FMN. N179 is a substrate binding site. S182 functions as the Nucleophile in the catalytic mechanism. Residue N184 participates in substrate binding. FMN contacts are provided by K224 and T252. Position 253 to 254 (253 to 254 (NT)) interacts with substrate. FMN is bound by residues G275, G304, and 325–326 (YT).

This sequence belongs to the dihydroorotate dehydrogenase family. Type 2 subfamily. As to quaternary structure, monomer. It depends on FMN as a cofactor.

It is found in the cell membrane. It catalyses the reaction (S)-dihydroorotate + a quinone = orotate + a quinol. It functions in the pathway pyrimidine metabolism; UMP biosynthesis via de novo pathway; orotate from (S)-dihydroorotate (quinone route): step 1/1. Its function is as follows. Catalyzes the conversion of dihydroorotate to orotate with quinone as electron acceptor. In Leptothrix cholodnii (strain ATCC 51168 / LMG 8142 / SP-6) (Leptothrix discophora (strain SP-6)), this protein is Dihydroorotate dehydrogenase (quinone).